Reading from the N-terminus, the 581-residue chain is Proline--tRNA ligase (581 aa).

The protein belongs to the class-II aminoacyl-tRNA synthetase family. ProS type 1 subfamily. As to quaternary structure, homodimer.

The protein resides in the cytoplasm. It catalyses the reaction tRNA(Pro) + L-proline + ATP = L-prolyl-tRNA(Pro) + AMP + diphosphate. Catalyzes the attachment of proline to tRNA(Pro) in a two-step reaction: proline is first activated by ATP to form Pro-AMP and then transferred to the acceptor end of tRNA(Pro). As ProRS can inadvertently accommodate and process non-cognate amino acids such as alanine and cysteine, to avoid such errors it has two additional distinct editing activities against alanine. One activity is designated as 'pretransfer' editing and involves the tRNA(Pro)-independent hydrolysis of activated Ala-AMP. The other activity is designated 'posttransfer' editing and involves deacylation of mischarged Ala-tRNA(Pro). The misacylated Cys-tRNA(Pro) is not edited by ProRS. This chain is Proline--tRNA ligase, found in Kosmotoga olearia (strain ATCC BAA-1733 / DSM 21960 / TBF 19.5.1).